A 413-amino-acid polypeptide reads, in one-letter code: Transposon Ty4-H Gag polyprotein (413 aa).

Residues 39-115 (RKVSIKDEQV…IQLLETNENN (77 aa)) are a coiled coil. The interval 380–413 (RQQQLKSSAKRTKVLEQDTKKVKQSVQQQKTGNY) is disordered. The segment covering 403–413 (QSVQQQKTGNY) has biased composition (low complexity).

Its function is as follows. Capsid protein (CA) is the structural component of the virus-like particle (VLP), forming the shell that encapsulates the retrotransposons dimeric RNA genome. This is Transposon Ty4-H Gag polyprotein (TY4A-H) from Saccharomyces cerevisiae (strain ATCC 204508 / S288c) (Baker's yeast).